The sequence spans 299 residues: Protease HtpX homolog (299 aa).

2 helical membrane-spanning segments follow: residues 15–35 (ILLLVFFLLLALVGYAVGYLF) and 39–59 (GLGGLVIALIIGFIYALSMIF). Residue His143 coordinates Zn(2+). Glu144 is a catalytic residue. His147 serves as a coordination point for Zn(2+). The next 2 helical transmembrane spans lie at 158-178 (IAVALASAITMLSSMAGRMMW) and 198-218 (IIMLVVSLLAIVLAPLAATLV). Position 227 (Glu227) interacts with Zn(2+).

Belongs to the peptidase M48B family. Zn(2+) serves as cofactor.

The protein resides in the cell membrane. The protein is Protease HtpX homolog of Streptococcus pneumoniae serotype 4 (strain ATCC BAA-334 / TIGR4).